The primary structure comprises 349 residues: Isopentenyl-diphosphate delta-isomerase (349 aa).

12–13 (RK) is a binding site for substrate. FMN-binding positions include 69 to 71 (GMT), S99, and N128. A substrate-binding site is contributed by Q158. E159 is a binding site for Mg(2+). FMN is bound by residues K189, S214, T219, 265-267 (GIR), and 286-287 (SG).

Belongs to the IPP isomerase type 2 family. Homooctamer. Dimer of tetramers. FMN is required as a cofactor. It depends on NADPH as a cofactor. Mg(2+) serves as cofactor.

It is found in the cytoplasm. The enzyme catalyses isopentenyl diphosphate = dimethylallyl diphosphate. Functionally, involved in the biosynthesis of isoprenoids. Catalyzes the 1,3-allylic rearrangement of the homoallylic substrate isopentenyl (IPP) to its allylic isomer, dimethylallyl diphosphate (DMAPP). This is Isopentenyl-diphosphate delta-isomerase from Latilactobacillus sakei subsp. sakei (strain 23K) (Lactobacillus sakei subsp. sakei).